Consider the following 163-residue polypeptide: Nucleotide-binding protein Spro_1084 (163 aa).

The protein belongs to the YajQ family.

Functionally, nucleotide-binding protein. This is Nucleotide-binding protein Spro_1084 from Serratia proteamaculans (strain 568).